Consider the following 548-residue polypeptide: Pentatricopeptide repeat-containing protein At1g62680, mitochondrial (548 aa).

Residues 1–43 (MQRSIAMTAKRFLHRNLLENGKPRTASSPSFSHCSSCRCWVRA) constitute a mitochondrion transit peptide. PPR repeat units follow at residues 84-118 (SIVDFNRLLSAIVKLKKYDVVISLGKKMEVLGIRN), 119-153 (DLYTFNIVINCFCCCFQVSLALSILGKMLKLGYEP), 154-188 (DRVTIGSLVNGFCRRNRVSDAVSLVDKMVEIGYKP), 189-223 (DIVAYNAIIDSLCKTKRVNDAFDFFKEIERKGIRP), 224-258 (NVVTYTALVNGLCNSSRWSDAARLLSDMIKKKITP), 259-293 (NVITYSALLDAFVKNGKVLEAKELFEEMVRMSIDP), 294-328 (DIVTYSSLINGLCLHDRIDEANQMFDLMVSKGCLA), 329-363 (DVVSYNTLINGFCKAKRVEDGMKLFREMSQRGLVS), 364-398 (NTVTYNTLIQGFFQAGDVDKAQEFFSQMDFFGISP), 399-433 (DIWTYNILLGGLCDNGELEKALVIFEDMQKREMDL), 434-468 (DIVTYTTVIRGMCKTGKVEEAWSLFCSLSLKGLKP), and 469-503 (DIVTYTTMMSGLCTKGLLHEVEALYTKMKQEGLMK).

This sequence belongs to the PPR family. P subfamily.

It localises to the mitochondrion. The chain is Pentatricopeptide repeat-containing protein At1g62680, mitochondrial from Arabidopsis thaliana (Mouse-ear cress).